The sequence spans 304 residues: Protoheme IX farnesyltransferase 1 (304 aa).

8 consecutive transmembrane segments (helical) span residues 24–44 (VVVL…KAPL), 47–67 (FVPW…AGAA), 99–119 (MALG…LAFT), 122–142 (LTAW…TGFL), 150–170 (IVIG…AITG), 176–196 (PLLL…ALCI), 228–248 (LVLF…LVYL), and 280–300 (YSIV…YLPL).

Belongs to the UbiA prenyltransferase family. Protoheme IX farnesyltransferase subfamily.

The protein localises to the cell inner membrane. It catalyses the reaction heme b + (2E,6E)-farnesyl diphosphate + H2O = Fe(II)-heme o + diphosphate. It participates in porphyrin-containing compound metabolism; heme O biosynthesis; heme O from protoheme: step 1/1. In terms of biological role, converts heme B (protoheme IX) to heme O by substitution of the vinyl group on carbon 2 of heme B porphyrin ring with a hydroxyethyl farnesyl side group. This chain is Protoheme IX farnesyltransferase 1, found in Pseudomonas aeruginosa (strain UCBPP-PA14).